We begin with the raw amino-acid sequence, 274 residues long: Single-stranded DNA-binding protein WHY1, chloroplastic (274 aa).

A chloroplast-targeting transit peptide spans 1-54 (MSNFSLSPSPTSGFSLNLQNPTKTSYLSFSSSINTIFAPLSSNTTKSFSGLTHK). Residues 100 to 105 (KGKAAL) are required for ssDNA binding. A Nuclear localization signal motif is present at residues 178–191 (KGRSDEGRVRKVLK). The disordered stretch occupies residues 253 to 274 (PEDASRSNNANPRSGAELEWNR).

This sequence belongs to the Whirly family. In terms of assembly, homotetramer.

It is found in the nucleus. The protein resides in the plastid. It localises to the chloroplast. Its function is as follows. Single-stranded DNA-binding protein that acts as a transcriptional activator of the pathogenesis-related gene PR-10a. Upon elicitation, binds a 30bp promoter sequence known as elicitor element response (ERE) and is required for PR-10a expression. This is Single-stranded DNA-binding protein WHY1, chloroplastic (WHY1) from Solanum tuberosum (Potato).